The following is a 643-amino-acid chain: DNA polymerase III subunit tau (643 aa).

ATP is bound at residue 45–52 (GTRGVGKT). Zn(2+) contacts are provided by C64, C73, C76, and C79. A disordered region spans residues 385-404 (TPTQVPPQPQSAPQQAPTVP).

Belongs to the DnaX/STICHEL family. The DNA polymerase III holoenzyme complex contains at least 10 different subunits organized into 3 functionally essential subassemblies: the Pol III core, the beta sliding clamp processivity factor and the clamp-loading complex. The Pol III core (subunits alpha, epsilon and theta) contains the polymerase and the 3'-5' exonuclease proofreading activities. The polymerase is tethered to the template via the dimeric beta sliding clamp processivity factor. The clamp-loading complex (also called gamma complex) assembles the beta sliding clamp onto the primed template and plays a central role in the organization and communication at the replication fork. The clamp-loading complex contains delta, delta', psi and chi, and 3 copies of either or both of two different DnaX proteins, gamma and tau. The DNA replisome complex has a single clamp loader (3 tau and 1 each of delta, delta', psi and chi subunits) which binds 3 Pol III cores (1 core on the leading strand and 2 on the lagging strand) each with a beta sliding clamp dimer. Additional proteins in the replisome are other copies of gamma, psi and chi, Ssb, DNA helicase and RNA primase. The clamp loader hydrolyzes ATP to assemble the beta processivity factor onto the primed template and plays a central role in the organization and communication at the replication fork; the minimal complex to load the beta sliding clamp on DNA is delta, delta', gamma.

The catalysed reaction is DNA(n) + a 2'-deoxyribonucleoside 5'-triphosphate = DNA(n+1) + diphosphate. Part of the beta sliding clamp loading complex, which hydrolyzes ATP to load the beta clamp onto primed DNA to form the DNA replication pre-initiation complex. DNA polymerase III is a complex, multichain enzyme responsible for most of the replicative synthesis in bacteria. This DNA polymerase also exhibits 3'-5' exonuclease activity. The gamma complex (gamma(3),delta,delta') is thought to load beta dimers onto DNA by binding ATP which alters the complex's conformation so it can bind beta sliding clamp dimers and open them at one interface. Primed DNA is recognized, ATP is hydrolyzed releasing the gamma complex and closing the beta sliding clamp ring around the primed DNA. Functionally, serves as a scaffold to trimerize the core complex. In terms of biological role, interacts with the delta and delta' subunits to transfer the beta subunit on the DNA. Interacts with ATP, drives ATP-induced conformational changes in the gamma complex that opens the beta sliding clamp ring. After loading of primed DNA ATP is hydrolyzed and the beta sliding clamp ring closes. The chain is DNA polymerase III subunit tau (dnaX) from Escherichia coli (strain K12).